The sequence spans 605 residues: Aspartate--tRNA(Asp/Asn) ligase (605 aa).

E172 is a binding site for L-aspartate. Positions 196-199 (QLFK) are aspartate. An L-aspartate-binding site is contributed by R218. ATP is bound by residues 218–220 (RDE) and Q227. H455 is a binding site for L-aspartate. E489 provides a ligand contact to ATP. R496 provides a ligand contact to L-aspartate. 541-544 (GLDR) contributes to the ATP binding site.

It belongs to the class-II aminoacyl-tRNA synthetase family. Type 1 subfamily. Homodimer.

The protein localises to the cytoplasm. The catalysed reaction is tRNA(Asx) + L-aspartate + ATP = L-aspartyl-tRNA(Asx) + AMP + diphosphate. Aspartyl-tRNA synthetase with relaxed tRNA specificity since it is able to aspartylate not only its cognate tRNA(Asp) but also tRNA(Asn). Reaction proceeds in two steps: L-aspartate is first activated by ATP to form Asp-AMP and then transferred to the acceptor end of tRNA(Asp/Asn). This is Aspartate--tRNA(Asp/Asn) ligase from Ralstonia nicotianae (strain ATCC BAA-1114 / GMI1000) (Ralstonia solanacearum).